The primary structure comprises 207 residues: Vexin (207 aa).

The tract at residues 65 to 104 is disordered; it reads RDTGDRRWLQTGRLQTARPPGAHPTKTPSRPVGISEPKTS.

This sequence belongs to the vexin family.

Its subcellular location is the cell membrane. The protein localises to the nucleus. In terms of biological role, required for neurogenesis in the neural plate and retina. Strongly cooperates with neural bHLH factors to promote neurogenesis. This Mus musculus (Mouse) protein is Vexin.